Reading from the N-terminus, the 114-residue chain is Flagellar hook-basal body complex protein FliE (114 aa).

It belongs to the FliE family.

It localises to the bacterial flagellum basal body. This chain is Flagellar hook-basal body complex protein FliE, found in Burkholderia cenocepacia (strain ATCC BAA-245 / DSM 16553 / LMG 16656 / NCTC 13227 / J2315 / CF5610) (Burkholderia cepacia (strain J2315)).